Reading from the N-terminus, the 412-residue chain is Peptidase T (412 aa).

Histidine 84 serves as a coordination point for Zn(2+). The active site involves aspartate 86. Position 146 (aspartate 146) interacts with Zn(2+). The active-site Proton acceptor is glutamate 179. The Zn(2+) site is built by glutamate 180, aspartate 202, and histidine 385.

It belongs to the peptidase M20B family. It depends on Zn(2+) as a cofactor.

It is found in the cytoplasm. It carries out the reaction Release of the N-terminal residue from a tripeptide.. Cleaves the N-terminal amino acid of tripeptides. In Haemophilus influenzae (strain PittGG), this protein is Peptidase T.